The following is a 416-amino-acid chain: Caspase-9 (416 aa).

Positions 1-92 constitute a CARD domain; sequence MDEADRRLLR…DMLASFLRTN (92 aa). Position 125 is a phosphothreonine; by MAPK1 (Thr125). The residue at position 153 (Tyr153) is a Phosphotyrosine; by ABL1. Catalysis depends on residues His237 and Cys287. The segment at 294 to 320 is disordered; it reads HGFEVASTSPEDESPGSNPEPDATPFQ. Residues Ser302, Ser307, and Ser310 each carry the phosphoserine modification. Residues 316–330 constitute a propeptide that is removed on maturation; it reads ATPFQEGLRTFDQLD. The residue at position 355 (Arg355) is a (Microbial infection) ADP-riboxanated arginine.

The protein belongs to the peptidase C14A family. Heterotetramer that consists of two anti-parallel arranged heterodimers, each one formed by a 35 kDa (p35) and a 10 kDa (p10) subunit. Caspase-9 and APAF1 bind to each other via their respective NH2-terminal CED-3 homologous domains in the presence of cytochrome C and ATP. Interacts (inactive form) with EFHD2. Interacts with HAX1. Interacts with BIRC2/c-IAP1, XIAP/BIRC4, BIRC5/survivin, BIRC6/bruce and BIRC7/livin. Interacts with ABL1 (via SH3 domain); the interaction is direct and increases in the response of cells to genotoxic stress and ABL1/c-Abl activation. Interacts with BCL2L10. Interacts with NleF from pathogenic E.coli. Cleavages at Asp-315 by granzyme B and at Asp-330 by caspase-3 generate the two active subunits. Caspase-8 and -10 can also be involved in these processing events. In terms of processing, phosphorylated at Thr-125 by MAPK1/ERK2. Phosphorylation at Thr-125 is sufficient to block caspase-9 processing and subsequent caspase-3 activation. Phosphorylation on Tyr-153 by ABL1/c-Abl; occurs in the response of cells to DNA damage. Post-translationally, (Microbial infection) ADP-riboxanation by C.violaceum CopC blocks CASP9 processing, preventing CASP9 activation and ability to mediate intrinsic apoptosis. Ubiquitinated by BIRC6; this activity is inhibited by DIABLO/SMAC. Ubiquitous, with highest expression in the heart, moderate expression in liver, skeletal muscle, and pancreas. Low levels in all other tissues. Within the heart, specifically expressed in myocytes.

It catalyses the reaction Strict requirement for an Asp residue at position P1 and with a marked preference for His at position P2. It has a preferred cleavage sequence of Leu-Gly-His-Asp-|-Xaa.. Its activity is regulated as follows. Inhibited by the effector protein NleF that is produced by pathogenic E.coli; this inhibits apoptosis. Inhibited by BIRC6; following inhibition of BIRC6-caspase binding by DIABLO/SMAC, BIRC6 is subjected to caspase cleavage, leading to an increase in active caspases. Functionally, involved in the activation cascade of caspases responsible for apoptosis execution. Binding of caspase-9 to Apaf-1 leads to activation of the protease which then cleaves and activates effector caspases caspase-3 (CASP3) or caspase-7 (CASP7). Promotes DNA damage-induced apoptosis in a ABL1/c-Abl-dependent manner. Proteolytically cleaves poly(ADP-ribose) polymerase (PARP). Cleaves BIRC6 following inhibition of BIRC6-caspase binding by DIABLO/SMAC. In terms of biological role, lacks activity is an dominant-negative inhibitor of caspase-9. The sequence is that of Caspase-9 (CASP9) from Homo sapiens (Human).